Reading from the N-terminus, the 275-residue chain is Anthracycline biosynthesis protein DnrV (275 aa).

VOC domains are found at residues 8–136 (APAW…VWRK) and 150–263 (SVGW…VVEL).

It participates in antibiotic biosynthesis; daunorubicin biosynthesis. The protein operates within antibiotic biosynthesis; carminomycin biosynthesis. Involved in the biosynthesis of the anthracyclines carminomycin and daunorubicin (daunomycin) which are aromatic polyketide antibiotics that exhibit high cytotoxicity and are widely applied in the chemotherapy of a variety of cancers. In vivo, it acts jointly with DoxA in the conversion of 13-deoxycarminomycin and 13-deoxydaunorubicin to yield carminomycin and daunorubicin, respectively. In vitro, it also acts jointly with DoxA in the C-14 hydroxylation of daunorubicin to form doxorubicin, although this strain is not a doxorubicin producer. This is Anthracycline biosynthesis protein DnrV (dnrV) from Streptomyces peucetius.